We begin with the raw amino-acid sequence, 286 residues long: Putative short-chain type dehydrogenase/reductase Rv0148 (286 aa).

An NAD(+)-binding site is contributed by Val-11–Val-35. Ser-151 is a substrate binding site. Tyr-164 acts as the Proton acceptor in catalysis. Lys-280 participates in a covalent cross-link: Isoglutamyl lysine isopeptide (Lys-Gln) (interchain with Q-Cter in protein Pup).

This sequence belongs to the short-chain dehydrogenases/reductases (SDR) family. Post-translationally, pupylated at Lys-280 by the prokaryotic ubiquitin-like protein Pup, which probably leads to its degradation by the proteasome.

This chain is Putative short-chain type dehydrogenase/reductase Rv0148, found in Mycobacterium tuberculosis (strain ATCC 25618 / H37Rv).